Consider the following 314-residue polypeptide: Pseudouridine-5'-phosphate glycosidase (314 aa).

Residue E30 is the Proton donor of the active site. K91 and V111 together coordinate substrate. D143 is a Mn(2+) binding site. A substrate-binding site is contributed by 145-147; the sequence is SAD. K164 functions as the Nucleophile in the catalytic mechanism.

It belongs to the pseudouridine-5'-phosphate glycosidase family. As to quaternary structure, homotrimer. Mn(2+) is required as a cofactor.

The catalysed reaction is D-ribose 5-phosphate + uracil = psi-UMP + H2O. In terms of biological role, catalyzes the reversible cleavage of pseudouridine 5'-phosphate (PsiMP) to ribose 5-phosphate and uracil. Functions biologically in the cleavage direction, as part of a pseudouridine degradation pathway. This Cupriavidus pinatubonensis (strain JMP 134 / LMG 1197) (Cupriavidus necator (strain JMP 134)) protein is Pseudouridine-5'-phosphate glycosidase.